Reading from the N-terminus, the 257-residue chain is Diaminopimelate epimerase (257 aa).

Substrate is bound by residues Asn-6 and Asn-57. The active-site Proton donor is the Cys-66. Substrate-binding positions include 67–68, Asn-170, and 188–189; these read GN and ER. The active-site Proton acceptor is Cys-198. Position 199-200 (199-200) interacts with substrate; it reads GT.

It belongs to the diaminopimelate epimerase family. As to quaternary structure, homodimer.

The protein localises to the cytoplasm. The catalysed reaction is (2S,6S)-2,6-diaminopimelate = meso-2,6-diaminopimelate. It participates in amino-acid biosynthesis; L-lysine biosynthesis via DAP pathway; DL-2,6-diaminopimelate from LL-2,6-diaminopimelate: step 1/1. In terms of biological role, catalyzes the stereoinversion of LL-2,6-diaminopimelate (L,L-DAP) to meso-diaminopimelate (meso-DAP), a precursor of L-lysine and an essential component of the bacterial peptidoglycan. The chain is Diaminopimelate epimerase from Chlorobaculum tepidum (strain ATCC 49652 / DSM 12025 / NBRC 103806 / TLS) (Chlorobium tepidum).